The primary structure comprises 412 residues: Nuclear hormone receptor family member nhr-61 (412 aa).

Low complexity predominate over residues 1 to 19 (MIVDSISSSTASTSSSSPT). Residues 1 to 23 (MIVDSISSSTASTSSSSPTRGTP) form a disordered region. Positions 27–102 (SLQCAVCGDV…VGMNPRAVQG (76 aa)) form a DNA-binding region, nuclear receptor. 2 NR C4-type zinc fingers span residues 30–50 (CAVC…CNGC) and 66–90 (CRHG…LTRC). In terms of domain architecture, NR LBD spans 144-407 (KKEQIIDNLR…DWSQELRDHR (264 aa)).

It belongs to the nuclear hormone receptor family.

The protein localises to the nucleus. Orphan nuclear receptor. In Caenorhabditis elegans, this protein is Nuclear hormone receptor family member nhr-61 (nhr-61).